We begin with the raw amino-acid sequence, 217 residues long: MGQKVHPIGMRVGIIRDWDAKWYAEKEYADYLHEDLAIRKFIQKELAEASVSTIEIERAINKVIVSLHTAKPGMVIGKGGANVDALRAQLNKLTGKQVHINIIEIKSPDLDAHLVGENIARQLEQRVAFRRAQKQAIQRTMRAGAKGIKTQVSGRLNGADIARAEGYSEGTVPLHTLRADIDYAWEEADTTYGKLGVKVWIYRGEVLPARKNTKGGK.

The 69-residue stretch at 38 to 106 folds into the KH type-2 domain; the sequence is IRKFIQKELA…QVHINIIEIK (69 aa).

It belongs to the universal ribosomal protein uS3 family. Part of the 30S ribosomal subunit. Forms a tight complex with proteins S10 and S14.

Binds the lower part of the 30S subunit head. Binds mRNA in the 70S ribosome, positioning it for translation. In Streptococcus uberis (strain ATCC BAA-854 / 0140J), this protein is Small ribosomal subunit protein uS3.